Here is a 100-residue protein sequence, read N- to C-terminus: Small ribosomal subunit protein uS14c (100 aa).

This sequence belongs to the universal ribosomal protein uS14 family. In terms of assembly, part of the 30S ribosomal subunit.

It is found in the plastid. Its subcellular location is the chloroplast. Its function is as follows. Binds 16S rRNA, required for the assembly of 30S particles. The sequence is that of Small ribosomal subunit protein uS14c from Zygnema circumcarinatum (Green alga).